The following is a 541-amino-acid chain: MAKDIKYSADARVAMEAGVNKLANTVRVTLGPKGRNVVLDKSFGAPLITNDGVTIAKEIELEDSFENMGAQLVKEVATKTNDVAGDGTTTATVLAQAMINEGMKNLAAGANPIILRRGMKKATDCAVEAISSMSSAINGKDQIAKVAAISAGDDSVGEMVADAMDKVSKDGVITIEESKTMQTELDLVEGMQFDRGYVSAYMATDMDKMEANLDNPYILITDKKISNIQEILPVLEQIVQSGSRLLIIAEDIEGEALTTLVINKLRGTFTVVGVKAPGYGDRRKAMLQDIAILTGGTVISDELGLDLKEATLDQLGRAKSVKIQKENTIIVDGEGNKAEIEARISQIKAQIAETTSEFDKEKLQERLAKLAGGVAVIRVGAATETEMKEKKLRMEDALAATRAAVEEGIIAGGGSAYIHASKEVAKLAAKLEGDERTGAQIILKALEAPLSCIAQNAGLEGAVIVNKVREKKTGVGFNALTEKYVDMVEDGILDPSKVTRSALQNATSVASTFLTTEAAVASIKEPAPAMPAGGPGGMGMM.

ATP contacts are provided by residues 29–32, 86–90, glycine 413, 478–480, and aspartate 494; these read TLGP, DGTTT, and NAL.

Belongs to the chaperonin (HSP60) family. In terms of assembly, forms a cylinder of 14 subunits composed of two heptameric rings stacked back-to-back. Interacts with the co-chaperonin GroES.

It is found in the cytoplasm. It carries out the reaction ATP + H2O + a folded polypeptide = ADP + phosphate + an unfolded polypeptide.. Together with its co-chaperonin GroES, plays an essential role in assisting protein folding. The GroEL-GroES system forms a nano-cage that allows encapsulation of the non-native substrate proteins and provides a physical environment optimized to promote and accelerate protein folding. The chain is Chaperonin GroEL from Lachnoclostridium phytofermentans (strain ATCC 700394 / DSM 18823 / ISDg) (Clostridium phytofermentans).